The sequence spans 367 residues: Glutamate 5-kinase (367 aa).

Residue Lys-10 participates in ATP binding. Residues Ser-50, Asp-137, and Asn-149 each contribute to the substrate site. Residues 169–170 and 211–217 each bind ATP; these read TD and TGGMATK. Residues 275–353 form the PUA domain; the sequence is AGELVVDDGA…QQIGEILGYE (79 aa).

This sequence belongs to the glutamate 5-kinase family.

The protein resides in the cytoplasm. The catalysed reaction is L-glutamate + ATP = L-glutamyl 5-phosphate + ADP. Its pathway is amino-acid biosynthesis; L-proline biosynthesis; L-glutamate 5-semialdehyde from L-glutamate: step 1/2. Its function is as follows. Catalyzes the transfer of a phosphate group to glutamate to form L-glutamate 5-phosphate. This Erwinia tasmaniensis (strain DSM 17950 / CFBP 7177 / CIP 109463 / NCPPB 4357 / Et1/99) protein is Glutamate 5-kinase.